The chain runs to 39 residues: Potassium channel toxin alpha-KTx 2.8 (39 aa).

Disulfide bonds link cysteine 7-cysteine 29, cysteine 13-cysteine 34, and cysteine 17-cysteine 36.

The protein belongs to the short scorpion toxin superfamily. Potassium channel inhibitor family. Alpha-KTx 02 subfamily. In terms of tissue distribution, expressed by the venom gland.

It is found in the secreted. In terms of biological role, blocks Kv1.3/KCNA3 voltage-gated potassium channels of human T-lymphocytes (Kd=0.71 nM). In Centruroides elegans (Bark scorpion), this protein is Potassium channel toxin alpha-KTx 2.8.